Reading from the N-terminus, the 546-residue chain is MAAKDVKFGRSAREKMLRGVDILADAVKVTLGPKGRNVVIDKSFGAPRITKDGVSVAKEIELEDKFENMGAQMLREVASKTNDTAGDGTTTATVLGQAIVQEGAKAVAAGMNPMDLKRGIDLAVTEVVAELLGKAKKINTSEEVAQVGTISANGEAEIGKMIADAMQKVGNEGVITVEEAKTAETELEVVEGMQFDRGYLSPYFVTNPEKMVADLEDAYILLHEKKLSNLQALLPVLEAVVQTSKPLVIIAEDVEGEALATLVVNKLRGGLKIAAVKAPGFGDRRKAMLEDIAILTGGQVISEDLGIKLETVTLDMLGRAKKVSISKENTTIVDGAGQKAEIDARVSQIKQQIEETSSDYDREKLQERLAKLAGGVAVIRVGGATEVEVKEKKDRVDDALNATRAAVEEGIVAGGGTALLRASAKISAKGINADQEAGINIVRRALQAPARQITTNAGEEASVIVGKILENASETYGYNTANGEFGDLIKAGVVDPVKVVRTALQNAASVAGLLITTEAMIAELPKKDAAPAGMPGGMGGMGGMDF.

ATP contacts are provided by residues 30–33 (TLGP), K51, 87–91 (DGTTT), G415, and D495.

It belongs to the chaperonin (HSP60) family. Forms a cylinder of 14 subunits composed of two heptameric rings stacked back-to-back. Interacts with the co-chaperonin GroES.

The protein localises to the cytoplasm. The enzyme catalyses ATP + H2O + a folded polypeptide = ADP + phosphate + an unfolded polypeptide.. Functionally, together with its co-chaperonin GroES, plays an essential role in assisting protein folding. The GroEL-GroES system forms a nano-cage that allows encapsulation of the non-native substrate proteins and provides a physical environment optimized to promote and accelerate protein folding. In Brucella anthropi (strain ATCC 49188 / DSM 6882 / CCUG 24695 / JCM 21032 / LMG 3331 / NBRC 15819 / NCTC 12168 / Alc 37) (Ochrobactrum anthropi), this protein is Chaperonin GroEL.